The following is a 526-amino-acid chain: UDP-N-acetylmuramoyl-L-alanyl-D-glutamate--2,6-diaminopimelate ligase (526 aa).

2 residues coordinate UDP-N-acetyl-alpha-D-muramoyl-L-alanyl-D-glutamate: leucine 48 and serine 50. 136–142 (GTSGKTT) contributes to the ATP binding site. Residues 178-179 (TT), serine 205, and arginine 213 each bind UDP-N-acetyl-alpha-D-muramoyl-L-alanyl-D-glutamate. Position 245 is an N6-carboxylysine (lysine 245). Meso-2,6-diaminopimelate contacts are provided by residues arginine 408, 432–435 (DNPR), glycine 490, and glutamate 494. A Meso-diaminopimelate recognition motif motif is present at residues 432-435 (DNPR).

Belongs to the MurCDEF family. MurE subfamily. Requires Mg(2+) as cofactor. Carboxylation is probably crucial for Mg(2+) binding and, consequently, for the gamma-phosphate positioning of ATP.

Its subcellular location is the cytoplasm. It catalyses the reaction UDP-N-acetyl-alpha-D-muramoyl-L-alanyl-D-glutamate + meso-2,6-diaminopimelate + ATP = UDP-N-acetyl-alpha-D-muramoyl-L-alanyl-gamma-D-glutamyl-meso-2,6-diaminopimelate + ADP + phosphate + H(+). The protein operates within cell wall biogenesis; peptidoglycan biosynthesis. Catalyzes the addition of meso-diaminopimelic acid to the nucleotide precursor UDP-N-acetylmuramoyl-L-alanyl-D-glutamate (UMAG) in the biosynthesis of bacterial cell-wall peptidoglycan. This Corynebacterium efficiens (strain DSM 44549 / YS-314 / AJ 12310 / JCM 11189 / NBRC 100395) protein is UDP-N-acetylmuramoyl-L-alanyl-D-glutamate--2,6-diaminopimelate ligase.